A 739-amino-acid chain; its full sequence is MFLLLALLTELGRLQAHEGSEGIFLHVTVPRKIKSNDSEVSERKMIYIITIDGQPYTLHLGKQSFLPQNFLVYTYNETGSLHSVSPYFMMHCHYQGYAAEFPNSFVTLSICSGLRGFLQFENISYGIEPVESSARFEHIIYQMKNNDPNVSILAVNYSHIWQKDQPYKVPLNSQIKNLSKLLPQYLEIYIIVEKALYDYMGSEMMAVTQKIVQVIGLVNTMFTQFKLTVILSSLELWSNENQISTSGDADDILQRFLAWKRDYLILRPHDIAYLLVYRKHPKYVGATFPGTVCNKSYDAGIAMYPDAIGLEGFSVIIAQLLGLNVGLTYDDITQCFCLRATCIMNHEAVSASGRKIFSNCSMHDYRYFVSKFETKCLQKLSNLQPLHQNQPVCGNGILESNEECDCGNKNECQFKKCCDYNTCKLKGSVKCGSGPCCTSKCELSIAGTPCRKSIDPECDFTEYCNGTSSNCVPDTYALNGRLCKLGTAYCYNGQCQTTDNQCAKIFGKGAQGAPFACFKEVNSLHERSENCGFKNSQPLPCERKDVLCGKLACVQPHKNANKSDAQSTVYSYIQDHVCVSIATGSSMRSDGTDNAYVADGTMCGPEMYCVNKTCRKVHLMGYNCNATTKCKGKGICNNFGNCQCFPGHRPPDCKFQFGSPGGSIDDGNFQKSGDFYTEKGYNTHWNNWFILSFCIFLPFFIVFTTVIFKRNEISKSCNRENAEYNRNSSVVSESDDVGH.

An N-terminal signal peptide occupies residues 1 to 16 (MFLLLALLTELGRLQA). Residues 17–184 (HEGSEGIFLH…IKNLSKLLPQ (168 aa)) constitute a propeptide that is removed on maturation. N-linked (GlcNAc...) asparagine glycosylation is found at Asn36, Asn76, Asn122, Asn149, Asn156, Asn177, and Asn294. The Extracellular segment spans residues 177–687 (NLSKLLPQYL…EKGYNTHWNN (511 aa)). Positions 184 to 381 (QYLEIYIIVE…FETKCLQKLS (198 aa)) constitute a Peptidase M12B domain. Disulfide bonds link Cys293–Cys376, Cys335–Cys360, Cys337–Cys342, and Cys450–Cys471. Asn359, Asn465, Asn561, Asn611, and Asn625 each carry an N-linked (GlcNAc...) asparagine glycan. In terms of domain architecture, Disintegrin spans 390–479 (QPVCGNGILE…NCVPDTYALN (90 aa)). Residues 620–654 (MGYNCNATTKCKGKGICNNFGNCQCFPGHRPPDCK) enclose the EGF-like domain. Intrachain disulfides connect Cys624–Cys636, Cys630–Cys642, and Cys644–Cys653. Residues 688–708 (WFILSFCIFLPFFIVFTTVIF) form a helical membrane-spanning segment. Residues 709–739 (KRNEISKSCNRENAEYNRNSSVVSESDDVGH) lie on the Cytoplasmic side of the membrane.

The prodomain and the metalloprotease-like domain are cleaved during the epididymal maturation of the spermatozoa. Expressed specifically in testis.

It is found in the membrane. In terms of biological role, sperm surface membrane protein that may be involved in spermatogenesis and fertilization. This is a non catalytic metalloprotease-like protein. The polypeptide is Disintegrin and metalloproteinase domain-containing protein 18 (ADAM18) (Homo sapiens (Human)).